The sequence spans 833 residues: Protein translocase subunit SecA (833 aa).

ATP is bound by residues Gln87, 105–109, and Asp494; that span reads GEGKT. A disordered region spans residues 789 to 816; that stretch reads PAAVAYSGGEAEAGPAQPHREDPKVGRN. Residues 806 to 815 are compositionally biased toward basic and acidic residues; that stretch reads PHREDPKVGR. Zn(2+)-binding residues include Cys819, Cys821, Cys830, and Cys831.

Belongs to the SecA family. As to quaternary structure, monomer and homodimer. Part of the essential Sec protein translocation apparatus which comprises SecA, SecYEG and auxiliary proteins SecDF-YajC and YidC. Zn(2+) is required as a cofactor.

Its subcellular location is the cell inner membrane. It is found in the cytoplasm. The enzyme catalyses ATP + H2O + cellular proteinSide 1 = ADP + phosphate + cellular proteinSide 2.. Part of the Sec protein translocase complex. Interacts with the SecYEG preprotein conducting channel. Has a central role in coupling the hydrolysis of ATP to the transfer of proteins into and across the cell membrane, serving as an ATP-driven molecular motor driving the stepwise translocation of polypeptide chains across the membrane. This Nitratidesulfovibrio vulgaris (strain ATCC 29579 / DSM 644 / CCUG 34227 / NCIMB 8303 / VKM B-1760 / Hildenborough) (Desulfovibrio vulgaris) protein is Protein translocase subunit SecA.